A 692-amino-acid polypeptide reads, in one-letter code: Elongation factor G (692 aa).

Positions 8–282 (ENTRNIGIMA…AVIDYLPSPL (275 aa)) constitute a tr-type G domain. GTP-binding positions include 17–24 (AHIDAGKT), 81–85 (DTPGH), and 135–138 (NKMD).

The protein belongs to the TRAFAC class translation factor GTPase superfamily. Classic translation factor GTPase family. EF-G/EF-2 subfamily.

Its subcellular location is the cytoplasm. Functionally, catalyzes the GTP-dependent ribosomal translocation step during translation elongation. During this step, the ribosome changes from the pre-translocational (PRE) to the post-translocational (POST) state as the newly formed A-site-bound peptidyl-tRNA and P-site-bound deacylated tRNA move to the P and E sites, respectively. Catalyzes the coordinated movement of the two tRNA molecules, the mRNA and conformational changes in the ribosome. The polypeptide is Elongation factor G (Bacillus cereus (strain ZK / E33L)).